Consider the following 388-residue polypeptide: Pepsin A-1 (388 aa).

The signal sequence occupies residues Met1–Cys15. 2 consecutive propeptides (activation peptide) follow at residues Ile16–Asp40 and Phe41–Leu62. The 310-residue stretch at Tyr76–Ala385 folds into the Peptidase A1 domain. Asp94 is an active-site residue. A disulfide bridge connects residues Cys107 and Cys112. Residue Ser130 is modified to Phosphoserine. Cys268 and Cys272 are disulfide-bonded. The active site involves Asp277. An intrachain disulfide couples Cys311 to Cys344.

The protein belongs to the peptidase A1 family. Post-translationally, each pepsinogen is converted to corresponding pepsin at pH 2.0 in part as a result of the release of a 47 AA activation segment and in part as a result of stepwise proteolytic cleavage via an intermediate form(s).

The protein localises to the secreted. It carries out the reaction Preferential cleavage: hydrophobic, preferably aromatic, residues in P1 and P1' positions. Cleaves 1-Phe-|-Val-2, 4-Gln-|-His-5, 13-Glu-|-Ala-14, 14-Ala-|-Leu-15, 15-Leu-|-Tyr-16, 16-Tyr-|-Leu-17, 23-Gly-|-Phe-24, 24-Phe-|-Phe-25 and 25-Phe-|-Tyr-26 bonds in the B chain of insulin.. Functionally, shows particularly broad specificity; although bonds involving phenylalanine and leucine are preferred, many others are also cleaved to some extent. The polypeptide is Pepsin A-1 (PGA) (Macaca fuscata fuscata (Japanese macaque)).